Consider the following 41-residue polypeptide: Large ribosomal subunit protein bL36 (41 aa).

Belongs to the bacterial ribosomal protein bL36 family.

In Rhodopseudomonas palustris (strain HaA2), this protein is Large ribosomal subunit protein bL36.